The following is a 341-amino-acid chain: L-threonine 3-dehydrogenase (341 aa).

Cys-38 provides a ligand contact to Zn(2+). Residues Thr-40 and His-43 each act as charge relay system in the active site. Positions 63, 64, 93, 96, 99, and 107 each coordinate Zn(2+). Residues Ile-175, Asp-195, Arg-200, 262–264, and 286–287 contribute to the NAD(+) site; these read LGI and IY.

It belongs to the zinc-containing alcohol dehydrogenase family. As to quaternary structure, homotetramer. It depends on Zn(2+) as a cofactor.

The protein localises to the cytoplasm. It catalyses the reaction L-threonine + NAD(+) = (2S)-2-amino-3-oxobutanoate + NADH + H(+). It functions in the pathway amino-acid degradation; L-threonine degradation via oxydo-reductase pathway; glycine from L-threonine: step 1/2. Functionally, catalyzes the NAD(+)-dependent oxidation of L-threonine to 2-amino-3-ketobutyrate. This Escherichia coli (strain K12 / MC4100 / BW2952) protein is L-threonine 3-dehydrogenase.